We begin with the raw amino-acid sequence, 730 residues long: Polyphosphate kinase (730 aa).

Over residues 1–21 (MMRHDRNVTEIDAETRPDENL) the composition is skewed to basic and acidic residues. The disordered stretch occupies residues 1-39 (MMRHDRNVTEIDAETRPDENLWHSGDSAVGAPPAATPAA). ATP is bound at residue asparagine 86. Mg(2+) is bound by residues arginine 423 and arginine 453. The active-site Phosphohistidine intermediate is the histidine 483. Residues tyrosine 516, arginine 612, and histidine 640 each contribute to the ATP site.

Belongs to the polyphosphate kinase 1 (PPK1) family. Mg(2+) is required as a cofactor. Post-translationally, an intermediate of this reaction is the autophosphorylated ppk in which a phosphate is covalently linked to a histidine residue through a N-P bond.

The catalysed reaction is [phosphate](n) + ATP = [phosphate](n+1) + ADP. Catalyzes the reversible transfer of the terminal phosphate of ATP to form a long-chain polyphosphate (polyP). The chain is Polyphosphate kinase from Mycobacterium avium (strain 104).